We begin with the raw amino-acid sequence, 930 residues long: Polypeptide N-acetylgalactosaminyltransferase 5 (930 aa).

Over 1-12 the chain is Cytoplasmic; that stretch reads MNKIRKFFRGSG. A helical; Signal-anchor for type II membrane protein transmembrane segment spans residues 13-35; it reads RVLAFIFAASVIWLLFDMAALRL. Over 36 to 930 the chain is Lumenal; sequence SFSEINAGLL…KWKFEKYYEV (895 aa). Residues 190–209 are disordered; sequence KQEAPQNYNVSSDTSKQASE. The span at 193–209 shows a compositional bias: polar residues; it reads APQNYNVSSDTSKQASE. N198, N213, and N283 each carry an N-linked (GlcNAc...) asparagine glycan. S285 is subject to Phosphoserine. 4 N-linked (GlcNAc...) asparagine glycosylation sites follow: N287, N309, N355, and N387. The disordered stretch occupies residues 327 to 381; the sequence is DTKEVPNSKTQTVFPKLLGGSPHKQIPRNQSKTSSSPPALKKAVSQSKPTISGGL. The segment covering 353–363 has biased composition (polar residues); that stretch reads PRNQSKTSSSP. Cystine bridges form between C476–C708, C699–C779, and C812–C825. The interval 485-594 is catalytic subdomain A; that stretch reads LPTTSIIMCF…VGWLEPLLER (110 aa). Positions 526 and 555 each coordinate substrate. An N-linked (GlcNAc...) asparagine glycan is attached at N568. D578 is a Mn(2+) binding site. S579 is a substrate binding site. Residue H580 participates in Mn(2+) binding. A catalytic subdomain B region spans residues 654-716; it reads IIRCPVMAGG…PCSRVGHIFR (63 aa). Position 685 (W685) interacts with substrate. A Mn(2+)-binding site is contributed by H713. Substrate is bound by residues R716 and Y721. N766, N817, and N835 each carry an N-linked (GlcNAc...) asparagine glycan. In terms of domain architecture, Ricin B-type lectin spans 794 to 925; the sequence is KAPVVRASGV…MELQQKWKFE (132 aa). 2 disulfides stabilise this stretch: C848–C863 and C898–C913. The N-linked (GlcNAc...) asparagine glycan is linked to N902.

It belongs to the glycosyltransferase 2 family. GalNAc-T subfamily. As to quaternary structure, interacts with EXT2. Does not interact with EXT1, EXTL1 or EXTL3. Mn(2+) is required as a cofactor. As to expression, expressed at low level. Not expressed before E7.5 during embryogenesis. Expressed in dental mesenchyme and tongue. Accumulates in a subset of mesenchymal cells at the ventral-most portions of the 12.5 dpc maxilla and mandible underlying the dental lamina.

It is found in the golgi apparatus membrane. The enzyme catalyses L-seryl-[protein] + UDP-N-acetyl-alpha-D-galactosamine = a 3-O-[N-acetyl-alpha-D-galactosaminyl]-L-seryl-[protein] + UDP + H(+). It carries out the reaction L-threonyl-[protein] + UDP-N-acetyl-alpha-D-galactosamine = a 3-O-[N-acetyl-alpha-D-galactosaminyl]-L-threonyl-[protein] + UDP + H(+). It participates in protein modification; protein glycosylation. Catalyzes the initial reaction in O-linked oligosaccharide biosynthesis, the transfer of an N-acetyl-D-galactosamine residue to a serine or threonine residue on the protein receptor. Has activity toward EA2 peptide substrate, but has a weak activity toward Muc2 or Muc1b substrates. The protein is Polypeptide N-acetylgalactosaminyltransferase 5 (Galnt5) of Mus musculus (Mouse).